The primary structure comprises 741 residues: Penicillin-binding protein 1B (741 aa).

Residues M1–F12 are Cytoplasmic-facing. A helical; Signal-anchor for type II membrane protein membrane pass occupies residues L13–F33. At K34–T741 the chain is on the extracellular side. The segment at L139–V311 is transglycosylase. Residue E177 is the Proton donor; for transglycosylase activity of the active site. Residues E395–N687 form a transpeptidase region. Residue S454 is the Acyl-ester intermediate; for transpeptidase activity of the active site.

This sequence in the N-terminal section; belongs to the glycosyltransferase 51 family. In the C-terminal section; belongs to the transpeptidase family.

The protein localises to the cell membrane. It carries out the reaction [GlcNAc-(1-&gt;4)-Mur2Ac(oyl-L-Ala-gamma-D-Glu-L-Lys-D-Ala-D-Ala)](n)-di-trans,octa-cis-undecaprenyl diphosphate + beta-D-GlcNAc-(1-&gt;4)-Mur2Ac(oyl-L-Ala-gamma-D-Glu-L-Lys-D-Ala-D-Ala)-di-trans,octa-cis-undecaprenyl diphosphate = [GlcNAc-(1-&gt;4)-Mur2Ac(oyl-L-Ala-gamma-D-Glu-L-Lys-D-Ala-D-Ala)](n+1)-di-trans,octa-cis-undecaprenyl diphosphate + di-trans,octa-cis-undecaprenyl diphosphate + H(+). It catalyses the reaction Preferential cleavage: (Ac)2-L-Lys-D-Ala-|-D-Ala. Also transpeptidation of peptidyl-alanyl moieties that are N-acyl substituents of D-alanine.. It functions in the pathway cell wall biogenesis; peptidoglycan biosynthesis. Cell wall formation. Synthesis of cross-linked peptidoglycan from the lipid intermediates. The enzyme has a penicillin-insensitive transglycosylase N-terminal domain (formation of linear glycan strands) and a penicillin-sensitive transpeptidase C-terminal domain (cross-linking of the peptide subunits). This is Penicillin-binding protein 1B (mrcB) from Buchnera aphidicola subsp. Baizongia pistaciae (strain Bp).